The chain runs to 339 residues: MTTTPDLRVGVGGAGQMGADHIQRITRVISGATVSAIVEPDAGRAAAAAAAPGSRAFASLDDALDASALEAVVIATPGQFHELVLVPALAAGLPVLCEKPLTPDSAEALRVLELEQTLDRPHIQLGFMRRFDDEYRALRELVVSGDAGELLFLRGVHRNPSVPESYTQSMLITDSVVHEFDVMPWLAGSPVASVEVKYPRRNDRAPERLREPILVLIELRNGVLVDVEMNVSVRFGYQVATEAVFQTGTARIGQPAGLQRWSDARFSIAEHTSFTTRFARAYDAQVQAWVDAVRDGSLVAGPNAWDGYLVALACEAGVRALSEPGPIAFAPAERPAFYA.

The protein belongs to the Gfo/Idh/MocA family. Homotetramer.

It carries out the reaction myo-inositol + NAD(+) = scyllo-inosose + NADH + H(+). Involved in the oxidation of myo-inositol (MI) to 2-keto-myo-inositol (2KMI or 2-inosose). The protein is Inositol 2-dehydrogenase of Leifsonia xyli subsp. xyli (strain CTCB07).